The chain runs to 168 residues: Small ribosomal subunit protein uS5 (168 aa).

Residues 13-76 enclose the S5 DRBM domain; sequence LQEKLIAVNR…EKARRNMVTV (64 aa).

This sequence belongs to the universal ribosomal protein uS5 family. As to quaternary structure, part of the 30S ribosomal subunit. Contacts proteins S4 and S8.

Functionally, with S4 and S12 plays an important role in translational accuracy. Its function is as follows. Located at the back of the 30S subunit body where it stabilizes the conformation of the head with respect to the body. The polypeptide is Small ribosomal subunit protein uS5 (Shewanella amazonensis (strain ATCC BAA-1098 / SB2B)).